A 658-amino-acid chain; its full sequence is Integrator complex subunit 9 (658 aa).

Lys58 is covalently cross-linked (Glycyl lysine isopeptide (Lys-Gly) (interchain with G-Cter in SUMO2)). The disordered stretch occupies residues 548–572 (DNKHVLQPPPKPTQPTSSKKRKRVN). Positions 566 to 570 (KKRKR) match the Nuclear localization signal motif.

Belongs to the metallo-beta-lactamase superfamily. RNA-metabolizing metallo-beta-lactamase-like family. INTS9 subfamily. In terms of assembly, component of the Integrator complex, composed of core subunits INTS1, INTS2, INTS3, INTS4, INTS5, INTS6, INTS7, INTS8, INTS9/RC74, INTS10, INTS11/CPSF3L, INTS12, INTS13, INTS14 and INTS15. The core complex associates with protein phosphatase 2A subunits PPP2CA and PPP2R1A, to form the Integrator-PP2A (INTAC) complex. INTS9 is part of the RNA endonuclease subcomplex, composed of INTS4, INTS9, INTS11 and inositol hexakisphosphate (InsP6). Interacts with WDR73; interaction is required for the assembly of the RNA endonuclease subcomplex in the cytoplasm. Interacts with BRAT1; interaction is required for the assembly of the RNA endonuclease subcomplex. Interacts with ESRRB, ESRRB is not a core component of the Integrator complex and this association is a bridge for the interaction with the multiprotein complex Integrator; attracts the transcriptional machinery.

It localises to the nucleus. The protein localises to the cytoplasm. Component of the integrator complex, a multiprotein complex that terminates RNA polymerase II (Pol II) transcription in the promoter-proximal region of genes. The integrator complex provides a quality checkpoint during transcription elongation by driving premature transcription termination of transcripts that are unfavorably configured for transcriptional elongation: the complex terminates transcription by (1) catalyzing dephosphorylation of the C-terminal domain (CTD) of Pol II subunit POLR2A/RPB1 and SUPT5H/SPT5, (2) degrading the exiting nascent RNA transcript via endonuclease activity and (3) promoting the release of Pol II from bound DNA. The integrator complex is also involved in terminating the synthesis of non-coding Pol II transcripts, such as enhancer RNAs (eRNAs), small nuclear RNAs (snRNAs), telomerase RNAs and long non-coding RNAs (lncRNAs). Mediates recruitment of cytoplasmic dynein to the nuclear envelope, probably as component of the integrator complex. The protein is Integrator complex subunit 9 (Ints9) of Mus musculus (Mouse).